The primary structure comprises 177 residues: Translation initiation factor IF-3 (177 aa).

This sequence belongs to the IF-3 family. As to quaternary structure, monomer.

The protein resides in the cytoplasm. In terms of biological role, IF-3 binds to the 30S ribosomal subunit and shifts the equilibrium between 70S ribosomes and their 50S and 30S subunits in favor of the free subunits, thus enhancing the availability of 30S subunits on which protein synthesis initiation begins. This Elusimicrobium minutum (strain Pei191) protein is Translation initiation factor IF-3.